The chain runs to 137 residues: Large-conductance mechanosensitive channel (137 aa).

Transmembrane regions (helical) follow at residues 9–29 (AFAV…GAAF) and 79–99 (IQTI…VKAI).

Belongs to the MscL family. In terms of assembly, homopentamer.

The protein localises to the cell inner membrane. Functionally, channel that opens in response to stretch forces in the membrane lipid bilayer. May participate in the regulation of osmotic pressure changes within the cell. This chain is Large-conductance mechanosensitive channel, found in Pseudomonas aeruginosa (strain UCBPP-PA14).